We begin with the raw amino-acid sequence, 282 residues long: HTH-type transcriptional activator RhaR (282 aa).

Residues 179–277 (DKLITALANS…GMTPSQWRHL (99 aa)) enclose the HTH araC/xylS-type domain. 2 consecutive DNA-binding regions (H-T-H motif) follow at residues 196–217 (DAFC…RAQT) and 244–267 (VSEI…TRET).

Binds DNA as a dimer.

The protein resides in the cytoplasm. Its function is as follows. Activates expression of the rhaSR operon in response to L-rhamnose. This Salmonella typhi protein is HTH-type transcriptional activator RhaR.